The following is a 149-amino-acid chain: Nucleoside diphosphate kinase (149 aa).

Residues lysine 9, phenylalanine 57, arginine 85, threonine 91, arginine 102, and asparagine 112 each contribute to the ATP site. Histidine 115 functions as the Pros-phosphohistidine intermediate in the catalytic mechanism.

It belongs to the NDK family. In terms of assembly, homotetramer. It depends on Mg(2+) as a cofactor.

It localises to the cytoplasm. It catalyses the reaction a 2'-deoxyribonucleoside 5'-diphosphate + ATP = a 2'-deoxyribonucleoside 5'-triphosphate + ADP. It carries out the reaction a ribonucleoside 5'-diphosphate + ATP = a ribonucleoside 5'-triphosphate + ADP. Its function is as follows. Major role in the synthesis of nucleoside triphosphates other than ATP. The ATP gamma phosphate is transferred to the NDP beta phosphate via a ping-pong mechanism, using a phosphorylated active-site intermediate. In Desulforamulus reducens (strain ATCC BAA-1160 / DSM 100696 / MI-1) (Desulfotomaculum reducens), this protein is Nucleoside diphosphate kinase.